Here is a 146-residue protein sequence, read N- to C-terminus: UPF0178 protein BAMEG_1545 (146 aa).

The protein belongs to the UPF0178 family.

This Bacillus anthracis (strain CDC 684 / NRRL 3495) protein is UPF0178 protein BAMEG_1545.